Reading from the N-terminus, the 339-residue chain is Glyceraldehyde-3-phosphate dehydrogenase (339 aa).

NAD(+) is bound by residues 11-12 and G110; that span reads TI. Residue 139-141 coordinates D-glyceraldehyde 3-phosphate; it reads SCN. The active-site Nucleophile is the C140. An NAD(+)-binding site is contributed by R168. 194-195 contributes to the D-glyceraldehyde 3-phosphate binding site; the sequence is HG. Q301 serves as a coordination point for NAD(+).

It belongs to the glyceraldehyde-3-phosphate dehydrogenase family. Homotetramer.

It localises to the cytoplasm. The catalysed reaction is D-glyceraldehyde 3-phosphate + phosphate + NADP(+) = (2R)-3-phospho-glyceroyl phosphate + NADPH + H(+). It carries out the reaction D-glyceraldehyde 3-phosphate + phosphate + NAD(+) = (2R)-3-phospho-glyceroyl phosphate + NADH + H(+). It participates in carbohydrate degradation; glycolysis; pyruvate from D-glyceraldehyde 3-phosphate: step 1/5. The protein is Glyceraldehyde-3-phosphate dehydrogenase of Methanospirillum hungatei JF-1 (strain ATCC 27890 / DSM 864 / NBRC 100397 / JF-1).